A 326-amino-acid chain; its full sequence is Beta-ketoacyl-[acyl-carrier-protein] synthase III (326 aa).

Residues C112 and H251 contribute to the active site. The tract at residues Q252 to R256 is ACP-binding. N281 is a catalytic residue.

It belongs to the thiolase-like superfamily. FabH family. Homodimer.

Its subcellular location is the cytoplasm. The enzyme catalyses malonyl-[ACP] + acetyl-CoA + H(+) = 3-oxobutanoyl-[ACP] + CO2 + CoA. It participates in lipid metabolism; fatty acid biosynthesis. In terms of biological role, catalyzes the condensation reaction of fatty acid synthesis by the addition to an acyl acceptor of two carbons from malonyl-ACP. Catalyzes the first condensation reaction which initiates fatty acid synthesis and may therefore play a role in governing the total rate of fatty acid production. Possesses both acetoacetyl-ACP synthase and acetyl transacylase activities. Its substrate specificity determines the biosynthesis of branched-chain and/or straight-chain of fatty acids. The sequence is that of Beta-ketoacyl-[acyl-carrier-protein] synthase III from Clostridium botulinum (strain ATCC 19397 / Type A).